The primary structure comprises 420 residues: tRNA (guanine-N(7)-)-methyltransferase non-catalytic subunit TRM82 (420 aa).

The span at 59 to 68 (KENDSKRQKS) shows a compositional bias: basic and acidic residues. Residues 59-82 (KENDSKRQKSESGQAKVSKIPTPG) form a disordered region. WD repeat units lie at residues 87–127 (PIYN…DNCL), 179–220 (GHVS…VIKN), 224–266 (GHHE…AKIE), and 340–379 (SYED…EETN).

Belongs to the WD repeat TRM82 family. Forms a heterodimer with the catalytic subunit TRM8.

It localises to the nucleus. It participates in tRNA modification; N(7)-methylguanine-tRNA biosynthesis. Its function is as follows. Required for the formation of N(7)-methylguanine at position 46 (m7G46) in tRNA. In the complex, it is required to stabilize and induce conformational changes of the catalytic subunit. In Meyerozyma guilliermondii (strain ATCC 6260 / CBS 566 / DSM 6381 / JCM 1539 / NBRC 10279 / NRRL Y-324) (Yeast), this protein is tRNA (guanine-N(7)-)-methyltransferase non-catalytic subunit TRM82.